The following is a 251-amino-acid chain: Ell1-associated factor 1 (251 aa).

Disordered regions lie at residues 110-187 (SKTV…DMEV) and 201-251 (FDQE…EDED). A compositionally biased stretch (polar residues) spans 112–123 (TVPSNAITQSDN). A compositionally biased stretch (low complexity) spans 124–135 (SQISESKSTSQS). The span at 143-157 (RRKEKELEASKDGKI) shows a compositional bias: basic and acidic residues. 2 stretches are compositionally biased toward polar residues: residues 204 to 220 (EFNS…TASK) and 236 to 251 (SSAQ…EDED). Serine 247 carries the phosphoserine modification.

Belongs to the EAF family. As to quaternary structure, forms a stable heterodimer with ell1. Ell1-eaf1 complex interacts with RNA polymerase II.

It is found in the nucleus. Activates transcription elongation by RNA polymerase II and pyrophosphorolysis as a complex with ell1. Acts as a transcriptional transactivator of ell1 elongation activities. This chain is Ell1-associated factor 1 (eaf1), found in Schizosaccharomyces pombe (strain 972 / ATCC 24843) (Fission yeast).